Consider the following 440-residue polypeptide: Enolase (440 aa).

Positions 159 and 168 each coordinate substrate. Glu-211 serves as the catalytic Proton donor. Mg(2+) contacts are provided by Asp-245, Glu-296, and Asp-321. Substrate is bound by residues Glu-296 and Asp-321. Catalysis depends on Lys-346, which acts as the Proton acceptor. Residues 373–376 (SHRS) and Lys-397 contribute to the substrate site.

This sequence belongs to the enolase family. As to quaternary structure, homodimer. Requires Mg(2+) as cofactor.

The protein resides in the cytoplasm. It catalyses the reaction (2R)-2-phosphoglycerate = phosphoenolpyruvate + H2O. The protein operates within carbohydrate degradation; glycolysis; pyruvate from D-glyceraldehyde 3-phosphate: step 4/5. In Tuber borchii (White truffle), this protein is Enolase (eno-1).